Reading from the N-terminus, the 415-residue chain is uncharacterized protein (415 aa).

His88 lines the Zn(2+) pocket. Residue Asp90 is part of the active site. Asp121 is a Zn(2+) binding site. The active-site Proton acceptor is Glu155. Glu156, Asp185, and His392 together coordinate Zn(2+).

The protein belongs to the peptidase M20A family. Zn(2+) serves as cofactor. Requires Co(2+) as cofactor.

This is an uncharacterized protein from Methanococcus maripaludis (strain DSM 14266 / JCM 13030 / NBRC 101832 / S2 / LL).